Reading from the N-terminus, the 414-residue chain is MSGAPPSYSFVALPPRAKDGLVVFGKNSARPRDEVQEVVYFPAVDHEAESKVECTYISIDQVPRTHAIVISRPAWLWGAEMGANEHGVCIANEAINAREPAAETEALLGMDLVRLGLERGTTAKEALDIIVSLLDEHGQGGNYYEDAHSCHSFQSAYLLVDRDEAWVLETVGKYWAAERITEGVRCICNHLSLTTKMDEEHPELRTYAQSQGWWTGEDEFNFAQVFSPADDHLDCCAGKDSLEKQEESITVQTMINILRDKASGVCIDSESFLTTASIVSVLPQNRSSPCIHYFTGTPDPSRSIFKPFIFVDDVKLVPKAQSPCFGDDDPAKKEPRFQEKPDRRHELYKAHEWARAVIESDQEQGRTLRKTMLELEKQGLEAMEEILSSPEPPDPAEVGDLFYDCVDTEMKFFK.

It belongs to the peptidase C69 family. Secernin subfamily.

The protein localises to the cytoplasm. Regulates exocytosis in mast cells. Increases both the extent of secretion and the sensitivity of mast cells to stimulation with calcium. The protein is Secernin-1 (Scrn1) of Rattus norvegicus (Rat).